A 102-amino-acid chain; its full sequence is Small ribosomal subunit protein uS14 (102 aa).

The protein belongs to the universal ribosomal protein uS14 family. As to quaternary structure, part of the 30S ribosomal subunit. Contacts proteins S3 and S10.

In terms of biological role, binds 16S rRNA, required for the assembly of 30S particles and may also be responsible for determining the conformation of the 16S rRNA at the A site. This is Small ribosomal subunit protein uS14 from Dichelobacter nodosus (strain VCS1703A).